A 476-amino-acid polypeptide reads, in one-letter code: Bifunctional protein HldE (476 aa).

The tract at residues 1–318 is ribokinase; it reads MKVTLPDFRR…ENAIRGRAET (318 aa). 195 to 198 provides a ligand contact to ATP; sequence NLSE. Aspartate 264 is a catalytic residue. A cytidylyltransferase region spans residues 344-476; sequence MTNGIFDILH…IIQSIKNGLG (133 aa).

It in the N-terminal section; belongs to the carbohydrate kinase PfkB family. In the C-terminal section; belongs to the cytidylyltransferase family. In terms of assembly, homodimer.

It carries out the reaction D-glycero-beta-D-manno-heptose 7-phosphate + ATP = D-glycero-beta-D-manno-heptose 1,7-bisphosphate + ADP + H(+). It catalyses the reaction D-glycero-beta-D-manno-heptose 1-phosphate + ATP + H(+) = ADP-D-glycero-beta-D-manno-heptose + diphosphate. It participates in nucleotide-sugar biosynthesis; ADP-L-glycero-beta-D-manno-heptose biosynthesis; ADP-L-glycero-beta-D-manno-heptose from D-glycero-beta-D-manno-heptose 7-phosphate: step 1/4. Its pathway is nucleotide-sugar biosynthesis; ADP-L-glycero-beta-D-manno-heptose biosynthesis; ADP-L-glycero-beta-D-manno-heptose from D-glycero-beta-D-manno-heptose 7-phosphate: step 3/4. Catalyzes the phosphorylation of D-glycero-D-manno-heptose 7-phosphate at the C-1 position to selectively form D-glycero-beta-D-manno-heptose-1,7-bisphosphate. Functionally, catalyzes the ADP transfer from ATP to D-glycero-beta-D-manno-heptose 1-phosphate, yielding ADP-D-glycero-beta-D-manno-heptose. The protein is Bifunctional protein HldE of Yersinia enterocolitica serotype O:8 / biotype 1B (strain NCTC 13174 / 8081).